A 452-amino-acid chain; its full sequence is Probable ECA polymerase (452 aa).

A run of 11 helical transmembrane segments spans residues 6-26, 37-57, 63-83, 118-138, 155-175, 181-201, 207-227, 228-248, 341-361, 378-398, and 410-430; these read FSGL…LTWF, VFFS…TSVL, VGVA…CFYG, VILM…NGFL, GVAL…VYFL, AWLF…MIVG, IIIA…ISLW, MLAA…LKRY, LVVM…GMII, YKAA…IVLA, and VFFL…FWLF.

Belongs to the WzyE family. In terms of assembly, probably part of a complex composed of WzxE, WzyE and WzzE.

Its subcellular location is the cell inner membrane. It functions in the pathway bacterial outer membrane biogenesis; enterobacterial common antigen biosynthesis. In terms of biological role, probably involved in the polymerization of enterobacterial common antigen (ECA) trisaccharide repeat units. The chain is Probable ECA polymerase from Salmonella newport (strain SL254).